The sequence spans 3640 residues: Serine/threonine-protein kinase SMG1 (3640 aa).

Polar residues predominate over residues 21-34; it reads NDWQPRSDSLSASQ. The disordered stretch occupies residues 21–41; it reads NDWQPRSDSLSASQDGVKCSV. The 349-residue stretch at 1495–1843 folds into the FAT domain; sequence YCHSGKCELA…LYPAIVGSIS (349 aa). Residues 1794–1829 form an HEAT repeat; sequence APWRGIIPQLFSRLNHPEAYIRQSICSLLCRVAQDS. Residues 1870–1890 are disordered; sequence GLCGGESETGSGPTSQESSRG. Positions 1874–1887 are enriched in low complexity; sequence GESETGSGPTSQES. A PI3K/PI4K catalytic domain is found at 2102–2441; the sequence is VGNTITILPT…MERDITRSLF (340 aa). The G-loop stretch occupies residues 2108-2114; it reads ILPTKTK. Positions 2310–2318 are catalytic loop; the sequence is GLGDRHLDN. Positions 2330–2354 are activation loop; it reads HIDYNVCFEKGKSLRVPEKVPFRMT. An FATC domain is found at 3608 to 3640; it reads RRMSVTEQVDYVIKEATNVDNLAQLYEGWTAWV.

The protein belongs to the PI3/PI4-kinase family. Mn(2+) is required as a cofactor. In terms of processing, autophosphorylated.

It is found in the nucleus. The protein localises to the cytoplasm. It carries out the reaction L-seryl-[protein] + ATP = O-phospho-L-seryl-[protein] + ADP + H(+). The enzyme catalyses L-threonyl-[protein] + ATP = O-phospho-L-threonyl-[protein] + ADP + H(+). In terms of biological role, serine/threonine protein kinase involved in both mRNA surveillance and genotoxic stress response pathways. Recognizes the substrate consensus sequence [ST]-Q. Plays a central role in nonsense-mediated decay (NMD) of mRNAs containing premature stop codons by phosphorylating UPF1/RENT1. The chain is Serine/threonine-protein kinase SMG1 from Danio rerio (Zebrafish).